The sequence spans 431 residues: Magnetosome protein MamH (431 aa).

11 helical membrane passes run 21 to 41 (LLSALCMVFMTLVVAIQPLFL), 57 to 77 (ANVQVVTEVLDLFIFAYLGYL), 86 to 106 (IIVAGFLVAAIGAVIAPLSPW), 107 to 127 (IGGASIGALVVYYVSRVIMSA), 156 to 176 (TAFMMAFGVTLVYAVLMQIPA), 178 to 198 (AGIAVTMLLTAAVSLAGAWLA), 243 to 263 (MVFVGLFLMLWFIYFADLIKV), 274 to 294 (ILIGLMGAVVMLSIPVWRSFI), 302 to 321 (AVLLGMVLSALGFIMLGFII), 358 to 378 (LLGSVLGAFNVIGCIGIIFFV), and 380 to 400 (VGGFLFDYVGPPAPFVFTGVG).

This sequence belongs to the major facilitator superfamily.

It is found in the magnetosome membrane. Functionally, required for correct biomineralization of the magnetosome; probably transports some form of iron. Partially functionally redundant with MamZ. The chain is Magnetosome protein MamH (mamH) from Paramagnetospirillum magneticum (strain ATCC 700264 / AMB-1) (Magnetospirillum magneticum).